Here is a 745-residue protein sequence, read N- to C-terminus: Mediator of RNA polymerase II transcription subunit 25 (745 aa).

The interval 1–226 (MVPGSEGPAR…PRHMVLVRGL (226 aa)) is interaction with the Mediator complex. Polar residues predominate over residues 233–243 (SSTSGSLQTKQ). Disordered stretches follow at residues 233–266 (SSTS…QALP) and 299–374 (LGPR…VTPG). Residues 252 to 262 (ASAATLSAAPP) are compositionally biased toward low complexity. Pro residues predominate over residues 324–342 (PAPPLAPVPPGAPKPPPAS). Residues 389–543 (LGGQQSVSNK…VNGIRQVITN (155 aa)) are interaction with VP16. Residues 395-545 (VSNKLLAWSG…GIRQVITNHK (151 aa)) are interaction with CREBBP. 2 interaction with RARA regions span residues 563-652 (APPV…LLNP) and 639-705 (PGAN…WPTQ). The interval 584–738 (LRAPQPQPQG…PGLQPSVMED (155 aa)) is disordered. The span at 596–617 (GASAATGQPQPQGATQAPTGAP) shows a compositional bias: low complexity. Residues 618-631 (QGPPGAAPGPPPSG) show a composition bias toward pro residues. Residues 645–649 (LRSLL) carry the LXXLL motif motif. Residues 652–663 (PAPPQTGVPPPQ) show a composition bias toward pro residues. An Asymmetric dimethylarginine modification is found at R723.

The protein belongs to the Mediator complex subunit 25 family. In terms of assembly, component of the Mediator complex, which is composed of MED1, MED4, MED6, MED7, MED8, MED9, MED10, MED11, MED12, MED13, MED13L, MED14, MED15, MED16, MED17, MED18, MED19, MED20, MED21, MED22, MED23, MED24, MED25, MED26, MED27, MED29, MED30, MED31, CCNC, CDK8 and CDC2L6/CDK11. The MED12, MED13, CCNC and CDK8 subunits form a distinct module termed the CDK8 module. Mediator containing the CDK8 module is less active than Mediator lacking this module in supporting transcriptional activation. Individual preparations of the Mediator complex lacking one or more distinct subunits have been variously termed ARC, CRSP, DRIP, PC2, SMCC and TRAP. Interacts with CREBBP. Interacts with ESR1, GR and THRB in a ligand-dependent fashion. Binds the Herpes simplex virus activator VP16. Interacts with RARA and RXRA in a ligand-dependent fashion.

The protein localises to the nucleus. Functionally, component of the Mediator complex, a coactivator involved in the regulated transcription of nearly all RNA polymerase II-dependent genes. Mediator functions as a bridge to convey information from gene-specific regulatory proteins to the basal RNA polymerase II transcription machinery. Mediator is recruited to promoters by direct interactions with regulatory proteins and serves as a scaffold for the assembly of a functional preinitiation complex with RNA polymerase II and the general transcription factors. Required for RARA/RXRA-mediated transcription. The protein is Mediator of RNA polymerase II transcription subunit 25 (Med25) of Mus musculus (Mouse).